Consider the following 149-residue polypeptide: Large ribosomal subunit protein bL9 (149 aa).

This sequence belongs to the bacterial ribosomal protein bL9 family.

In terms of biological role, binds to the 23S rRNA. In Buchnera aphidicola subsp. Cinara cedri (strain Cc), this protein is Large ribosomal subunit protein bL9.